The primary structure comprises 153 residues: NAD(P)H-quinone oxidoreductase subunit N (153 aa).

This sequence belongs to the complex I NdhN subunit family. As to quaternary structure, NDH-1 can be composed of about 15 different subunits; different subcomplexes with different compositions have been identified which probably have different functions.

The protein localises to the cellular thylakoid membrane. It carries out the reaction a plastoquinone + NADH + (n+1) H(+)(in) = a plastoquinol + NAD(+) + n H(+)(out). The catalysed reaction is a plastoquinone + NADPH + (n+1) H(+)(in) = a plastoquinol + NADP(+) + n H(+)(out). Functionally, NDH-1 shuttles electrons from an unknown electron donor, via FMN and iron-sulfur (Fe-S) centers, to quinones in the respiratory and/or the photosynthetic chain. The immediate electron acceptor for the enzyme in this species is believed to be plastoquinone. Couples the redox reaction to proton translocation, and thus conserves the redox energy in a proton gradient. Cyanobacterial NDH-1 also plays a role in inorganic carbon-concentration. The chain is NAD(P)H-quinone oxidoreductase subunit N from Prochlorococcus marinus (strain MIT 9211).